The following is a 420-amino-acid chain: Gamma-glutamyl phosphate reductase (420 aa).

This sequence belongs to the gamma-glutamyl phosphate reductase family.

Its subcellular location is the cytoplasm. The enzyme catalyses L-glutamate 5-semialdehyde + phosphate + NADP(+) = L-glutamyl 5-phosphate + NADPH + H(+). Its pathway is amino-acid biosynthesis; L-proline biosynthesis; L-glutamate 5-semialdehyde from L-glutamate: step 2/2. Its function is as follows. Catalyzes the NADPH-dependent reduction of L-glutamate 5-phosphate into L-glutamate 5-semialdehyde and phosphate. The product spontaneously undergoes cyclization to form 1-pyrroline-5-carboxylate. The chain is Gamma-glutamyl phosphate reductase from Acidiphilium cryptum (strain JF-5).